The chain runs to 182 residues: Homeobox expressed in ES cells 1-A (182 aa).

The segment at residues 103 to 163 (YRGRRPRTAF…QNRRAKLKRS (61 aa)) is a DNA-binding region (homeobox).

Belongs to the ANF homeobox family. In terms of tissue distribution, initially expressed in the anterior dorsal region of early embryos and later exclusively in the primordium of the anterior pituitary gland.

Its subcellular location is the nucleus. Appears to be involved in the regional specification of the anterior head of Xenopus embryos. In Xenopus laevis (African clawed frog), this protein is Homeobox expressed in ES cells 1-A (hesx1-a).